A 1509-amino-acid chain; its full sequence is Dynein axonemal assembly factor 1 homolog (1509 aa).

6 LRR repeats span residues 34–56, 57–78, 79–100, 101–122, 125–146, and 150–171; these read RLND…EEYT, ELKC…EKLS, KLKC…EPCR, ELDT…GTNI, VLNT…SDLV, and TLSV…KIFE. The 39-residue stretch at 185 to 223 folds into the LRRCT domain; that stretch reads PVVSRLPQYRKTLILACKELTYLDSRPVFPRDRACAEAW. Disordered regions lie at residues 252–280, 306–327, 962–1008, and 1103–1122; these read CTIR…DDTC, HPTS…ATSS, SGDL…DSKN, and TLQT…KLRN. The span at 309–318 shows a compositional bias: low complexity; sequence SESGASTSSS. The span at 978–990 shows a compositional bias: acidic residues; that stretch reads SESEDYDTADDEY. Residues 1103–1112 are compositionally biased toward polar residues; the sequence is TLQTSFSTVG.

This sequence belongs to the DNAAF1 family.

The protein localises to the cell projection. It localises to the cilium. Its function is as follows. Cilium-specific protein required for cilia structures. The chain is Dynein axonemal assembly factor 1 homolog (dtr) from Drosophila yakuba (Fruit fly).